Reading from the N-terminus, the 247-residue chain is Probable transcriptional regulatory protein PC1_1817 (247 aa).

Belongs to the TACO1 family.

The protein localises to the cytoplasm. This chain is Probable transcriptional regulatory protein PC1_1817, found in Pectobacterium carotovorum subsp. carotovorum (strain PC1).